The chain runs to 115 residues: Large ribosomal subunit protein uL24 (115 aa).

Belongs to the universal ribosomal protein uL24 family. Part of the 50S ribosomal subunit.

One of two assembly initiator proteins, it binds directly to the 5'-end of the 23S rRNA, where it nucleates assembly of the 50S subunit. Functionally, one of the proteins that surrounds the polypeptide exit tunnel on the outside of the subunit. The sequence is that of Large ribosomal subunit protein uL24 from Deinococcus geothermalis (strain DSM 11300 / CIP 105573 / AG-3a).